Consider the following 291-residue polypeptide: ATP synthase gamma chain (291 aa).

This sequence belongs to the ATPase gamma chain family. F-type ATPases have 2 components, CF(1) - the catalytic core - and CF(0) - the membrane proton channel. CF(1) has five subunits: alpha(3), beta(3), gamma(1), delta(1), epsilon(1). CF(0) has three main subunits: a, b and c.

Its subcellular location is the cell inner membrane. Produces ATP from ADP in the presence of a proton gradient across the membrane. The gamma chain is believed to be important in regulating ATPase activity and the flow of protons through the CF(0) complex. The chain is ATP synthase gamma chain from Sinorhizobium medicae (strain WSM419) (Ensifer medicae).